Consider the following 280-residue polypeptide: Cis-2,3-dihydrobiphenyl-2,3-diol dehydrogenase (280 aa).

9 to 33 contributes to the NAD(+) binding site; sequence LVTGGCAGLGRAIVDRFVCEGARVA. Residue serine 142 coordinates substrate. Tyrosine 155 serves as the catalytic Proton acceptor.

The protein belongs to the short-chain dehydrogenases/reductases (SDR) family.

The catalysed reaction is (2R,3S)-3-phenylcyclohexa-3,5-diene-1,2-diol + NAD(+) = biphenyl-2,3-diol + NADH + H(+). It functions in the pathway xenobiotic degradation; biphenyl degradation; 2-hydroxy-2,4-pentadienoate and benzoate from biphenyl: step 2/4. The chain is Cis-2,3-dihydrobiphenyl-2,3-diol dehydrogenase (bphB) from Rhodococcus globerulus.